The sequence spans 225 residues: Ribosomal RNA large subunit methyltransferase E (225 aa).

S-adenosyl-L-methionine contacts are provided by G76, W78, D99, D115, and D139. K179 serves as the catalytic Proton acceptor.

Belongs to the class I-like SAM-binding methyltransferase superfamily. RNA methyltransferase RlmE family.

It is found in the cytoplasm. The catalysed reaction is uridine(2552) in 23S rRNA + S-adenosyl-L-methionine = 2'-O-methyluridine(2552) in 23S rRNA + S-adenosyl-L-homocysteine + H(+). In terms of biological role, specifically methylates the uridine in position 2552 of 23S rRNA at the 2'-O position of the ribose in the fully assembled 50S ribosomal subunit. This Afipia carboxidovorans (strain ATCC 49405 / DSM 1227 / KCTC 32145 / OM5) (Oligotropha carboxidovorans) protein is Ribosomal RNA large subunit methyltransferase E.